The sequence spans 152 residues: Large ribosomal subunit protein bL9 (152 aa).

Belongs to the bacterial ribosomal protein bL9 family.

Functionally, binds to the 23S rRNA. The polypeptide is Large ribosomal subunit protein bL9 (Microcystis aeruginosa (strain NIES-843 / IAM M-2473)).